The sequence spans 197 residues: Tyrosine-protein phosphatase-like protein OCA2 (197 aa).

Residues 10–160 (SPVVSTDVSL…FETNLKIPRN (151 aa)) form the Tyrosine-protein phosphatase domain. Position 181 is a phosphoserine (Ser181).

The protein belongs to the protein-tyrosine phosphatase family.

Its subcellular location is the cytoplasm. Its function is as follows. Required for normal growth in the presence of linoleic acid hydroperoxide (LoaOOH). The sequence is that of Tyrosine-protein phosphatase-like protein OCA2 (OCA2) from Saccharomyces cerevisiae (strain ATCC 204508 / S288c) (Baker's yeast).